The primary structure comprises 132 residues: Small ribosomal subunit protein uS8 (132 aa).

The protein belongs to the universal ribosomal protein uS8 family. In terms of assembly, part of the 30S ribosomal subunit. Contacts proteins S5 and S12.

Functionally, one of the primary rRNA binding proteins, it binds directly to 16S rRNA central domain where it helps coordinate assembly of the platform of the 30S subunit. The polypeptide is Small ribosomal subunit protein uS8 (Flavobacterium johnsoniae (strain ATCC 17061 / DSM 2064 / JCM 8514 / BCRC 14874 / CCUG 350202 / NBRC 14942 / NCIMB 11054 / UW101) (Cytophaga johnsonae)).